The following is a 209-amino-acid chain: Redox-sensing transcriptional repressor Rex (209 aa).

The H-T-H motif DNA-binding region spans 16 to 55 (LYYRFIQNLSLSGKQRVSSAELSEAVKVDSATIRRDFSYF). Position 90–95 (90–95 (GVGNLG)) interacts with NAD(+).

Belongs to the transcriptional regulatory Rex family. In terms of assembly, homodimer.

Its subcellular location is the cytoplasm. Modulates transcription in response to changes in cellular NADH/NAD(+) redox state. This chain is Redox-sensing transcriptional repressor Rex, found in Bacillus cereus (strain AH187).